The following is a 55-amino-acid chain: Small ribosomal subunit protein bS21 (55 aa).

This sequence belongs to the bacterial ribosomal protein bS21 family.

The protein is Small ribosomal subunit protein bS21 of Phytoplasma mali (strain AT).